The primary structure comprises 123 residues: Histone H2B (123 aa).

The tract at residues Met-1 to Arg-31 is disordered. Residues Gly-9–Arg-31 are compositionally biased toward basic residues. Ser-110 carries O-linked (GlcNAc) serine glycosylation. Residue Lys-118 forms a Glycyl lysine isopeptide (Lys-Gly) (interchain with G-Cter in ubiquitin) linkage.

It belongs to the histone H2B family. As to quaternary structure, the nucleosome is a histone octamer containing two molecules each of H2A, H2B, H3 and H4 assembled in one H3-H4 heterotetramer and two H2A-H2B heterodimers. The octamer wraps approximately 147 bp of DNA. Monoubiquitination of Lys-118 gives a specific tag for epigenetic transcriptional activation and is also prerequisite for histone H3 'Lys-4' and 'Lys-79' methylation. In terms of processing, glcNAcylation at Ser-110 promotes monoubiquitination of Lys-118. It fluctuates in response to extracellular glucose, and associates with transcribed genes.

The protein resides in the nucleus. Its subcellular location is the chromosome. Its function is as follows. Core component of nucleosome. Nucleosomes wrap and compact DNA into chromatin, limiting DNA accessibility to the cellular machineries which require DNA as a template. Histones thereby play a central role in transcription regulation, DNA repair, DNA replication and chromosomal stability. DNA accessibility is regulated via a complex set of post-translational modifications of histones, also called histone code, and nucleosome remodeling. In Platynereis dumerilii (Dumeril's clam worm), this protein is Histone H2B.